Here is a 209-residue protein sequence, read N- to C-terminus: Imidazole glycerol phosphate synthase subunit HisH (209 aa).

The region spanning 1-205 (MIAIIDYGMG…KGVVETWKSS (205 aa)) is the Glutamine amidotransferase type-1 domain. Cys-79 (nucleophile) is an active-site residue. Residues His-180 and Glu-182 contribute to the active site.

In terms of assembly, heterodimer of HisH and HisF.

The protein localises to the cytoplasm. The catalysed reaction is 5-[(5-phospho-1-deoxy-D-ribulos-1-ylimino)methylamino]-1-(5-phospho-beta-D-ribosyl)imidazole-4-carboxamide + L-glutamine = D-erythro-1-(imidazol-4-yl)glycerol 3-phosphate + 5-amino-1-(5-phospho-beta-D-ribosyl)imidazole-4-carboxamide + L-glutamate + H(+). The enzyme catalyses L-glutamine + H2O = L-glutamate + NH4(+). It participates in amino-acid biosynthesis; L-histidine biosynthesis; L-histidine from 5-phospho-alpha-D-ribose 1-diphosphate: step 5/9. Its function is as follows. IGPS catalyzes the conversion of PRFAR and glutamine to IGP, AICAR and glutamate. The HisH subunit catalyzes the hydrolysis of glutamine to glutamate and ammonia as part of the synthesis of IGP and AICAR. The resulting ammonia molecule is channeled to the active site of HisF. In Bacillus thuringiensis (strain Al Hakam), this protein is Imidazole glycerol phosphate synthase subunit HisH.